The primary structure comprises 216 residues: Pyridoxine/pyridoxamine 5'-phosphate oxidase (216 aa).

Substrate contacts are provided by residues 9–12 and Arg67; that span reads RLSY. FMN-binding positions include 62–67, 77–78, Lys84, and Gln106; these read RIVLLR and YT. Substrate-binding residues include Tyr124, Arg128, and Ser132. Residues 142–143 and Trp188 each bind FMN; that span reads QS. 194-196 provides a ligand contact to substrate; that stretch reads RMH. Arg198 provides a ligand contact to FMN.

Belongs to the pyridoxamine 5'-phosphate oxidase family. Homodimer. It depends on FMN as a cofactor.

The catalysed reaction is pyridoxamine 5'-phosphate + O2 + H2O = pyridoxal 5'-phosphate + H2O2 + NH4(+). It catalyses the reaction pyridoxine 5'-phosphate + O2 = pyridoxal 5'-phosphate + H2O2. Its pathway is cofactor metabolism; pyridoxal 5'-phosphate salvage; pyridoxal 5'-phosphate from pyridoxamine 5'-phosphate: step 1/1. It functions in the pathway cofactor metabolism; pyridoxal 5'-phosphate salvage; pyridoxal 5'-phosphate from pyridoxine 5'-phosphate: step 1/1. Functionally, catalyzes the oxidation of either pyridoxine 5'-phosphate (PNP) or pyridoxamine 5'-phosphate (PMP) into pyridoxal 5'-phosphate (PLP). The protein is Pyridoxine/pyridoxamine 5'-phosphate oxidase of Psychrobacter arcticus (strain DSM 17307 / VKM B-2377 / 273-4).